Consider the following 270-residue polypeptide: DNA packaging protein OPG160 (270 aa).

25–32 contributes to the ATP binding site; that stretch reads GGSGSGKT.

Belongs to the orthopoxvirus OPG160 protein family. Interacts with protein OPG137.

In terms of biological role, participates in viral DNA packaging and virion morphogenesis. This Variola virus (isolate Human/India/Ind3/1967) (VARV) protein is DNA packaging protein OPG160 (OPG160).